A 294-amino-acid chain; its full sequence is 4-hydroxy-tetrahydrodipicolinate synthase (294 aa).

Thr-44 contacts pyruvate. Tyr-132 serves as the catalytic Proton donor/acceptor. Lys-160 serves as the catalytic Schiff-base intermediate with substrate. Ile-205 contacts pyruvate.

Belongs to the DapA family. Homotetramer; dimer of dimers.

The protein resides in the cytoplasm. The enzyme catalyses L-aspartate 4-semialdehyde + pyruvate = (2S,4S)-4-hydroxy-2,3,4,5-tetrahydrodipicolinate + H2O + H(+). Its pathway is amino-acid biosynthesis; L-lysine biosynthesis via DAP pathway; (S)-tetrahydrodipicolinate from L-aspartate: step 3/4. Functionally, catalyzes the condensation of (S)-aspartate-beta-semialdehyde [(S)-ASA] and pyruvate to 4-hydroxy-tetrahydrodipicolinate (HTPA). The chain is 4-hydroxy-tetrahydrodipicolinate synthase from Kosmotoga olearia (strain ATCC BAA-1733 / DSM 21960 / TBF 19.5.1).